Consider the following 363-residue polypeptide: MKVAISGGGTGGHVYPALALIRELKKSHPEAEFLYIGTEKGLEAGIVKREGIPFEAIEITGFKRSLSLENIKTVMRFLSGAKKSKQILRDFKPDVVIGTGGYVCGPVVYAAAKLKIPTLIHEQNSVAGLTNKFLSRYTDKVAICFEEVSDSFASEKIVFTGNPRASEVVGVDSEGALEAYGLVSGKPTVLVFGGSRGARGVNEAVEAVLPEWNNRDFQLLYVTGDVHYEKIKDSLAELNLGNHISVQPFIYDMPKILNAVTLVVSRAGATTLAELTALGVPSILIPSPYVTANHQENNARALEKNNAAIVITEAELKNTDLMATVDSILNDEAKLNSMKLSAKQMGRPDAAAKLVEAVLSIMK.

Residues 10 to 12 (TGG), asparagine 124, serine 195, isoleucine 250, and glutamine 295 each bind UDP-N-acetyl-alpha-D-glucosamine.

This sequence belongs to the glycosyltransferase 28 family. MurG subfamily.

It localises to the cell membrane. The enzyme catalyses di-trans,octa-cis-undecaprenyl diphospho-N-acetyl-alpha-D-muramoyl-L-alanyl-D-glutamyl-meso-2,6-diaminopimeloyl-D-alanyl-D-alanine + UDP-N-acetyl-alpha-D-glucosamine = di-trans,octa-cis-undecaprenyl diphospho-[N-acetyl-alpha-D-glucosaminyl-(1-&gt;4)]-N-acetyl-alpha-D-muramoyl-L-alanyl-D-glutamyl-meso-2,6-diaminopimeloyl-D-alanyl-D-alanine + UDP + H(+). It participates in cell wall biogenesis; peptidoglycan biosynthesis. Functionally, cell wall formation. Catalyzes the transfer of a GlcNAc subunit on undecaprenyl-pyrophosphoryl-MurNAc-pentapeptide (lipid intermediate I) to form undecaprenyl-pyrophosphoryl-MurNAc-(pentapeptide)GlcNAc (lipid intermediate II). This is UDP-N-acetylglucosamine--N-acetylmuramyl-(pentapeptide) pyrophosphoryl-undecaprenol N-acetylglucosamine transferase from Listeria monocytogenes serovar 1/2a (strain ATCC BAA-679 / EGD-e).